The sequence spans 232 residues: Ribose-5-phosphate isomerase A (232 aa).

Residues 28 to 31 (TGST), 83 to 86 (DGAD), and 96 to 99 (KGGG) each bind substrate. Residue E105 is the Proton acceptor of the active site. Residue K123 coordinates substrate.

This sequence belongs to the ribose 5-phosphate isomerase family. Homodimer.

It carries out the reaction aldehydo-D-ribose 5-phosphate = D-ribulose 5-phosphate. It participates in carbohydrate degradation; pentose phosphate pathway; D-ribose 5-phosphate from D-ribulose 5-phosphate (non-oxidative stage): step 1/1. Its function is as follows. Catalyzes the reversible conversion of ribose-5-phosphate to ribulose 5-phosphate. In Rhodopseudomonas palustris (strain BisB5), this protein is Ribose-5-phosphate isomerase A.